A 408-amino-acid chain; its full sequence is Imidazolonepropionase (408 aa).

Fe(3+)-binding residues include His-73 and His-75. Zn(2+)-binding residues include His-73 and His-75. Arg-82, Tyr-145, and His-178 together coordinate 4-imidazolone-5-propanoate. Tyr-145 contributes to the N-formimidoyl-L-glutamate binding site. A Fe(3+)-binding site is contributed by His-243. A Zn(2+)-binding site is contributed by His-243. Gln-246 contacts 4-imidazolone-5-propanoate. Asp-318 serves as a coordination point for Fe(3+). Residue Asp-318 participates in Zn(2+) binding. Residues Asn-320 and Gly-322 each coordinate N-formimidoyl-L-glutamate. A 4-imidazolone-5-propanoate-binding site is contributed by Ser-323.

Belongs to the metallo-dependent hydrolases superfamily. HutI family. The cofactor is Zn(2+). Requires Fe(3+) as cofactor.

It is found in the cytoplasm. It catalyses the reaction 4-imidazolone-5-propanoate + H2O = N-formimidoyl-L-glutamate. It participates in amino-acid degradation; L-histidine degradation into L-glutamate; N-formimidoyl-L-glutamate from L-histidine: step 3/3. In terms of biological role, catalyzes the hydrolytic cleavage of the carbon-nitrogen bond in imidazolone-5-propanoate to yield N-formimidoyl-L-glutamate. It is the third step in the universal histidine degradation pathway. The sequence is that of Imidazolonepropionase from Shewanella halifaxensis (strain HAW-EB4).